Consider the following 398-residue polypeptide: Lysophosphatidylserine lipase ABHD12 (398 aa).

The segment covering 1–15 (MRKRTEPVTLEHERC) has biased composition (basic and acidic residues). The segment at 1–24 (MRKRTEPVTLEHERCAASGSSSSG) is disordered. Topologically, residues 1–74 (MRKRTEPVTL…RKSLWFRLRK (74 aa)) are cytoplasmic. A helical transmembrane segment spans residues 75 to 95 (ILLCVLGFYIAIPFLVKLCPG). Topologically, residues 96-398 (IQAKLIFLNF…LGKSEPERQH (303 aa)) are extracellular. A glycan (N-linked (GlcNAc...) asparagine) is linked at Asn-123. Catalysis depends on Ser-246, which acts as the Nucleophile. Catalysis depends on charge relay system residues Asp-333 and His-372.

This sequence belongs to the serine esterase family. In terms of processing, glycosylated.

Its subcellular location is the endoplasmic reticulum membrane. The protein localises to the mitochondrion. It carries out the reaction 1-(9Z-octadecenoyl)-sn-glycero-3-phospho-L-serine + H2O = sn-glycero-3-phospho-L-serine + (9Z)-octadecenoate + H(+). It catalyses the reaction 1-(9Z-octadecenoyl)-sn-glycero-3-phospho-(1'-sn-glycerol) + H2O = sn-glycero-3-phospho-(1'-sn-glycerol) + (9Z)-octadecenoate + H(+). The catalysed reaction is 1-(9Z-octadecenoyl)-sn-glycero-3-phospho-(1D-myo-inositol) + H2O = sn-glycero-3-phospho-1D-myo-inositol + (9Z)-octadecenoate + H(+). The enzyme catalyses 1-(9Z-octadecenoyl)-sn-glycero-3-phosphoethanolamine + H2O = sn-glycero-3-phosphoethanolamine + (9Z)-octadecenoate + H(+). It carries out the reaction 1-(9Z-octadecenoyl)-sn-glycero-3-phosphocholine + H2O = 1-(9Z-octadecenoyl)-sn-glycerol + phosphocholine + H(+). It catalyses the reaction 2-(9Z-octadecenoyl)-glycerol + H2O = glycerol + (9Z)-octadecenoate + H(+). The catalysed reaction is 1-hexadecanoyl-sn-glycero-3-phospho-L-serine + H2O = sn-glycero-3-phospho-L-serine + hexadecanoate + H(+). The enzyme catalyses 2-(5Z,8Z,11Z,14Z-eicosatetraenoyl)-glycerol + H2O = glycerol + (5Z,8Z,11Z,14Z)-eicosatetraenoate + H(+). It carries out the reaction Hydrolyzes glycerol monoesters of long-chain fatty acids.. It catalyses the reaction 1-decanoylglycerol + H2O = decanoate + glycerol + H(+). The catalysed reaction is 1-dodecanoylglycerol + H2O = dodecanoate + glycerol + H(+). The enzyme catalyses 1-tetradecanoylglycerol + H2O = tetradecanoate + glycerol + H(+). It carries out the reaction 2-hexadecanoylglycerol + H2O = glycerol + hexadecanoate + H(+). It catalyses the reaction 1-(9Z-octadecenoyl)-glycerol + H2O = glycerol + (9Z)-octadecenoate + H(+). The catalysed reaction is 2-(9Z,12Z-octadecadienoyl)-glycerol + H2O = (9Z,12Z)-octadecadienoate + glycerol + H(+). The enzyme catalyses 1-(5Z,8Z,11Z,14Z-eicosatetraenoyl)-glycerol + H2O = glycerol + (5Z,8Z,11Z,14Z)-eicosatetraenoate + H(+). It carries out the reaction 1-(9Z,12Z-octadecadienoyl)-glycerol + H2O = (9Z,12Z)-octadecadienoate + glycerol + H(+). It catalyses the reaction 1-hexadecanoylglycerol + H2O = glycerol + hexadecanoate + H(+). The catalysed reaction is 1-octadecanoylglycerol + H2O = octadecanoate + glycerol + H(+). The enzyme catalyses 1-octadecanoyl-2-(9,10-epoxyoctadecanoyl)-sn-glycero-3-phospho-L-serine + H2O = 9,10-epoxyoctadecanoate + 1-octadecanoyl-sn-glycero-3-phosphoserine + H(+). It carries out the reaction 1-octadecanoyl-2-(10-hydroxyoctadecanoyl)-sn-glycero-3-phospho-L-serine + H2O = 1-octadecanoyl-sn-glycero-3-phosphoserine + 10-hydroxyoctadecanoate + H(+). It catalyses the reaction 1-hexadecanoyl-2-(10-hydroxyoctadecanoyl)-sn-glycero-3-phospho-L-serine + H2O = 10-hydroxyoctadecanoate + 1-hexadecanoyl-sn-glycero-3-phospho-L-serine + H(+). With respect to regulation, selectively inhibited by DO264 (N-3-pyridyl-N'-(1-[3-chloro-4-{2-chloro-4-(trifluoromethoxy)phenoxy}pyridine-2-yl]piperidin-4-yl)thiourea). Lysophosphatidylserine (LPS) lipase that mediates the hydrolysis of lysophosphatidylserine, a class of signaling lipids that regulates immunological and neurological processes. Represents a major lysophosphatidylserine lipase in the brain, thereby playing a key role in the central nervous system. Also able to hydrolyze oxidized phosphatidylserine; oxidized phosphatidylserine is produced in response to severe inflammatory stress and constitutes a proapoptotic 'eat me' signal. Also has monoacylglycerol (MAG) lipase activity: hydrolyzes 2-arachidonoylglycerol (2-AG), thereby acting as a regulator of endocannabinoid signaling pathways. Has a strong preference for very-long-chain lipid substrates; substrate specificity is likely due to improved catalysis and not improved substrate binding. The sequence is that of Lysophosphatidylserine lipase ABHD12 from Mus musculus (Mouse).